Reading from the N-terminus, the 323-residue chain is Pantothenate kinase (323 aa).

A compositionally biased stretch (polar residues) spans 1 to 12 (MAEQNAASTTGV). A disordered region spans residues 1–24 (MAEQNAASTTGVKPSPRTPDFSPY). 108–115 (GSVAVGKS) contacts ATP.

Belongs to the prokaryotic pantothenate kinase family.

The protein localises to the cytoplasm. It catalyses the reaction (R)-pantothenate + ATP = (R)-4'-phosphopantothenate + ADP + H(+). It functions in the pathway cofactor biosynthesis; coenzyme A biosynthesis; CoA from (R)-pantothenate: step 1/5. This chain is Pantothenate kinase, found in Corynebacterium glutamicum (strain R).